Here is a 634-residue protein sequence, read N- to C-terminus: Threonine--tRNA ligase (634 aa).

One can recognise a TGS domain in the interval 1 to 61 (MINIRFPDGS…NSNCELRLIT (61 aa)). The interval 241–532 (DHRKIGKVLD…LIEHYAGNLP (292 aa)) is catalytic. Residues Cys-332, His-383, and His-509 each contribute to the Zn(2+) site.

It belongs to the class-II aminoacyl-tRNA synthetase family. In terms of assembly, homodimer. The cofactor is Zn(2+).

The protein localises to the cytoplasm. The enzyme catalyses tRNA(Thr) + L-threonine + ATP = L-threonyl-tRNA(Thr) + AMP + diphosphate + H(+). Catalyzes the attachment of threonine to tRNA(Thr) in a two-step reaction: L-threonine is first activated by ATP to form Thr-AMP and then transferred to the acceptor end of tRNA(Thr). Also edits incorrectly charged L-seryl-tRNA(Thr). This is Threonine--tRNA ligase from Francisella tularensis subsp. mediasiatica (strain FSC147).